Reading from the N-terminus, the 271-residue chain is Formamidopyrimidine-DNA glycosylase (271 aa).

The Schiff-base intermediate with DNA role is filled by P2. E3 functions as the Proton donor in the catalytic mechanism. The active-site Proton donor; for beta-elimination activity is the K58. 3 residues coordinate DNA: H91, R110, and R152. Residues 237–271 (QIYGRSAHPCPICGTPIRLERIGQRASYYCTQCQH) form an FPG-type zinc finger. Residue R261 is the Proton donor; for delta-elimination activity of the active site.

This sequence belongs to the FPG family. Monomer. It depends on Zn(2+) as a cofactor.

The catalysed reaction is Hydrolysis of DNA containing ring-opened 7-methylguanine residues, releasing 2,6-diamino-4-hydroxy-5-(N-methyl)formamidopyrimidine.. It carries out the reaction 2'-deoxyribonucleotide-(2'-deoxyribose 5'-phosphate)-2'-deoxyribonucleotide-DNA = a 3'-end 2'-deoxyribonucleotide-(2,3-dehydro-2,3-deoxyribose 5'-phosphate)-DNA + a 5'-end 5'-phospho-2'-deoxyribonucleoside-DNA + H(+). In terms of biological role, involved in base excision repair of DNA damaged by oxidation or by mutagenic agents. Acts as a DNA glycosylase that recognizes and removes damaged bases. Has a preference for oxidized purines, such as 7,8-dihydro-8-oxoguanine (8-oxoG). Has AP (apurinic/apyrimidinic) lyase activity and introduces nicks in the DNA strand. Cleaves the DNA backbone by beta-delta elimination to generate a single-strand break at the site of the removed base with both 3'- and 5'-phosphates. This is Formamidopyrimidine-DNA glycosylase from Nitrosococcus oceani (strain ATCC 19707 / BCRC 17464 / JCM 30415 / NCIMB 11848 / C-107).